The following is a 98-amino-acid chain: NADH-ubiquinone oxidoreductase chain 4L (98 aa).

3 helical membrane-spanning segments follow: residues 1–21 (MTSI…GVLI), 28–48 (STLL…ALLI), and 59–79 (APII…ALLV).

The protein belongs to the complex I subunit 4L family. Core subunit of respiratory chain NADH dehydrogenase (Complex I) which is composed of 45 different subunits.

Its subcellular location is the mitochondrion inner membrane. The enzyme catalyses a ubiquinone + NADH + 5 H(+)(in) = a ubiquinol + NAD(+) + 4 H(+)(out). Core subunit of the mitochondrial membrane respiratory chain NADH dehydrogenase (Complex I) which catalyzes electron transfer from NADH through the respiratory chain, using ubiquinone as an electron acceptor. Part of the enzyme membrane arm which is embedded in the lipid bilayer and involved in proton translocation. The sequence is that of NADH-ubiquinone oxidoreductase chain 4L (MT-ND4L) from Trichosurus vulpecula (Brush-tailed possum).